The sequence spans 901 residues: MLIPSKLSRPVRLDHTVVRERLLAKLSGANNFRLALITSPAGYGKTTLVSQWAAGKSELGWFSLDEGDNQQERFASYLIAAIQQATNGHCTASEVMAQKRQYASLSSLFAQLFIELAEWHQPLYLVIDDYHLITNPVIHESMRFFLRHQPENLTLVVMSRNLPQLGIANLRVRDQLLEIGSQQLAFNHQEAKQFFDRRLTSPIEAAESSRMCDDVSGWATALQLIALSARQNSHSAHQSARRLSGINASHLSDYLVDEVLNNVDLATRHFLLKSAILRSMNDALITRVTGEENGQMRLEEIERQGLFLQRMDDSGEWFSYHPLFGNFLRQRCQWELAAELPEIHLAAAESWMAQGFPSEAIHHALAAGDASMLRDILLNHAWGLFNHSELALLEESLKALPWESLLENPRLVLLQAWLMQSQHRYSEVNTLLARAEQEIKGEMTGTLHAEFNALRAQVAINAGNPEEAERLARLALDELPIAWFYSRIVATSVHGEVLHCKGDLSRSLALMQQTEQMARHHDVWHYALWSLIQQSEIYFAQGFLQAAWETQDKAFQLIKEQHLEQLPMHEFLVRIRAQLLWAWSRLDEAEASARSGIEVLSSFQPQQQLQCLALLVQCSLARGDLDNARTLLNRLENLLGNGQYHSDWISNADKVRVIYWQMTGDKKAAANWLSQTPKPEFANNHFLQGQWRNIARAQILLGEFEPAEIVLEELNENARQLRLMSDLNRNLLLLNQLYWQAGRKNDAQRVLMEALQLANRTGFISHFVIEGEAMAQQLRQLIQLNTLPELEQHRAQRILREINQHHRHKFAHFDENFVERLLNHPEVPELIRTSPLTQREWQVLGLIYSGYSNEQIAGELEVAATTIKTHIRNLYQKLGVAHRQDAVQHAQQLLKMMGYGV.

39-46 contacts ATP; that stretch reads SPAGYGKT. One can recognise an HTH luxR-type domain in the interval 829–894; that stretch reads ELIRTSPLTQ…DAVQHAQQLL (66 aa). A DNA-binding region (H-T-H motif) is located at residues 853-872; it reads NEQIAGELEVAATTIKTHIR.

Belongs to the MalT family. Monomer in solution. Oligomerizes to an active state in the presence of the positive effectors ATP and maltotriose.

Activated by ATP and maltotriose, which are both required for DNA binding. Its function is as follows. Positively regulates the transcription of the maltose regulon whose gene products are responsible for uptake and catabolism of malto-oligosaccharides. Specifically binds to the promoter region of its target genes, recognizing a short DNA motif called the MalT box. This Escherichia fergusonii (strain ATCC 35469 / DSM 13698 / CCUG 18766 / IAM 14443 / JCM 21226 / LMG 7866 / NBRC 102419 / NCTC 12128 / CDC 0568-73) protein is HTH-type transcriptional regulator MalT.